Here is a 246-residue protein sequence, read N- to C-terminus: MKTFIFLALLGATVAFPIDDDDKIVGGYTCSRNSVPYQVSLNSGYHFCGGSLINSQWVVSAAHCYKSRIQVRLGEYNIAVSEGGEQFINAAKIIRHPRYNANTIDNDIMLIKLSSPATLNSRVSAIALPKSCPAAGTQCLISGWGNTQSIGQNYPDVLQCLKAPILSDSVCRNAYPGQISSNMMCLGYMEGGKDSCQGDSGGPVVCNGELQGVVSWGAGCAQKGKPGVSPKVCKYVSWIQQTIAAN.

The signal sequence occupies residues 1–15; sequence MKTFIFLALLGATVA. The propeptide at 16–23 is activation peptide; it reads FPIDDDDK. In terms of domain architecture, Peptidase S1 spans 24–244; it reads IVGGYTCSRN…YVSWIQQTIA (221 aa). Disulfide bonds link Cys-30–Cys-160, Cys-48–Cys-64, Cys-132–Cys-233, Cys-139–Cys-206, Cys-171–Cys-185, and Cys-196–Cys-220. Residue His-63 is the Charge relay system of the active site. The Ca(2+) site is built by Glu-75, Asn-77, Val-80, and Glu-85. Asp-107 (charge relay system) is an active-site residue. Residue Ser-200 is the Charge relay system of the active site.

The protein belongs to the peptidase S1 family. In terms of assembly, interacts with SERPINA1. The cofactor is Ca(2+).

The protein localises to the secreted. The protein resides in the extracellular space. It catalyses the reaction Preferential cleavage: Arg-|-Xaa, Lys-|-Xaa.. This is Serine protease 1 from Canis lupus familiaris (Dog).